Consider the following 483-residue polypeptide: Malonate-semialdehyde dehydrogenase 2 (483 aa).

Residues Phe-152, Lys-176, Glu-179, Arg-180, and Ser-229 each coordinate NAD(+). The active-site Nucleophile is Cys-284. Glu-384 is a binding site for NAD(+).

It belongs to the aldehyde dehydrogenase family. IolA subfamily. Homotetramer.

It catalyses the reaction 3-oxopropanoate + NAD(+) + CoA + H2O = hydrogencarbonate + acetyl-CoA + NADH + H(+). It carries out the reaction 2-methyl-3-oxopropanoate + NAD(+) + CoA + H2O = propanoyl-CoA + hydrogencarbonate + NADH + H(+). The protein operates within polyol metabolism; myo-inositol degradation into acetyl-CoA; acetyl-CoA from myo-inositol: step 7/7. In terms of biological role, catalyzes the oxidation of malonate semialdehyde (MSA) and methylmalonate semialdehyde (MMSA) into acetyl-CoA and propanoyl-CoA, respectively. Is involved in a myo-inositol catabolic pathway. Bicarbonate, and not CO2, is the end-product of the enzymatic reaction. In Geobacillus thermodenitrificans (strain NG80-2), this protein is Malonate-semialdehyde dehydrogenase 2.